The following is a 159-amino-acid chain: MSDEEHHFEPAADAGASKTYPQQAGTIRKNGYIVIKSRPCKVVEVSTSKTGKHGHAKCHFVAIDIFNGKKLEDIVPSSHNCDVPHVNRTDYQLIDISEDGFVSLLTDNGSTKDDLKLPTDDSLLTQIKDGFADGKDLVVSVMSAMGEEQICALKDIGPK.

Residues 1 to 10 (MSDEEHHFEP) are compositionally biased toward basic and acidic residues. The tract at residues 1-21 (MSDEEHHFEPAADAGASKTYP) is disordered. A Hypusine modification is found at Lys52.

This sequence belongs to the eIF-5A family. Lys-52 undergoes hypusination, a unique post-translational modification that consists in the addition of a butylamino group from spermidine to lysine side chain, leading to the formation of the unusual amino acid hypusine. eIF-5As are the only known proteins to undergo this modification, which is essential for their function.

In terms of biological role, translation factor that promotes translation elongation and termination, particularly upon ribosome stalling at specific amino acid sequence contexts. Binds between the exit (E) and peptidyl (P) site of the ribosome and promotes rescue of stalled ribosome: specifically required for efficient translation of polyproline-containing peptides as well as other motifs that stall the ribosome. Acts as a ribosome quality control (RQC) cofactor by joining the RQC complex to facilitate peptidyl transfer during CAT tailing step. The sequence is that of Eukaryotic translation initiation factor 5A-2 from Medicago sativa (Alfalfa).